We begin with the raw amino-acid sequence, 444 residues long: Glutamyl-tRNA reductase (444 aa).

Substrate-binding positions include 49–52 (TCNR), Ser-109, 114–116 (ETQ), and Gln-120. The active-site Nucleophile is the Cys-50. 189 to 194 (GAGKMG) serves as a coordination point for NADP(+).

Belongs to the glutamyl-tRNA reductase family. In terms of assembly, homodimer.

The enzyme catalyses (S)-4-amino-5-oxopentanoate + tRNA(Glu) + NADP(+) = L-glutamyl-tRNA(Glu) + NADPH + H(+). The protein operates within porphyrin-containing compound metabolism; protoporphyrin-IX biosynthesis; 5-aminolevulinate from L-glutamyl-tRNA(Glu): step 1/2. In terms of biological role, catalyzes the NADPH-dependent reduction of glutamyl-tRNA(Glu) to glutamate 1-semialdehyde (GSA). The protein is Glutamyl-tRNA reductase of Bacillus anthracis (strain A0248).